Consider the following 322-residue polypeptide: Probable heme-iron transport system permease protein IsdF (322 aa).

9 consecutive transmembrane segments (helical) span residues leucine 9 to glycine 29, isoleucine 61 to alanine 81, alanine 89 to isoleucine 109, phenylalanine 114 to leucine 134, valine 143 to leucine 163, isoleucine 179 to leucine 199, valine 233 to valine 253, valine 267 to glycine 287, and leucine 294 to isoleucine 314.

The protein belongs to the binding-protein-dependent transport system permease family. FecCD subfamily.

The protein localises to the cell membrane. In terms of biological role, part of the binding-protein-dependent transport system for heme-iron. Responsible for the translocation of the substrate across the membrane. This is Probable heme-iron transport system permease protein IsdF (isdF) from Staphylococcus aureus (strain bovine RF122 / ET3-1).